The following is a 286-amino-acid chain: Elongation factor Ts (286 aa).

Residues 79-82 are involved in Mg(2+) ion dislocation from EF-Tu; that stretch reads TDFV.

It belongs to the EF-Ts family.

The protein localises to the cytoplasm. Associates with the EF-Tu.GDP complex and induces the exchange of GDP to GTP. It remains bound to the aminoacyl-tRNA.EF-Tu.GTP complex up to the GTP hydrolysis stage on the ribosome. This Wolbachia pipientis wMel protein is Elongation factor Ts.